The primary structure comprises 316 residues: tRNA dimethylallyltransferase (316 aa).

Residue 17–24 (GPTASGKT) participates in ATP binding. 19–24 (TASGKT) contributes to the substrate binding site. 4 interaction with substrate tRNA regions span residues 42-45 (DSVL), 166-170 (QRLSR), 247-252 (RCVGYR), and 280-287 (KRQITWLR).

It belongs to the IPP transferase family. Monomer. Requires Mg(2+) as cofactor.

The enzyme catalyses adenosine(37) in tRNA + dimethylallyl diphosphate = N(6)-dimethylallyladenosine(37) in tRNA + diphosphate. Catalyzes the transfer of a dimethylallyl group onto the adenine at position 37 in tRNAs that read codons beginning with uridine, leading to the formation of N6-(dimethylallyl)adenosine (i(6)A). The protein is tRNA dimethylallyltransferase of Shigella flexneri.